A 67-amino-acid polypeptide reads, in one-letter code: Vespin (67 aa).

Residues 1-21 (MHPIIWELSHMVDLQAAAQKL) form the signal peptide.

As to expression, expressed by the venom gland.

The protein localises to the secreted. In terms of biological role, shows contractile activity on isolated ileum smooth muscle. This chain is Vespin, found in Vespa magnifica (Hornet).